The following is a 456-amino-acid chain: GTPase Der (456 aa).

2 EngA-type G domains span residues 4–169 (PVVA…PSKD) and 178–353 (VQLA…DQSR). GTP contacts are provided by residues 10-17 (GRPNVGKS), 57-61 (DTGGL), 120-123 (NKCE), 184-191 (GRPNVGKS), 231-235 (DTAGI), and 296-299 (NKWD). Residues 354–439 (RRVTTSVVNE…PIKLFWRGKQ (86 aa)) enclose the KH-like domain.

The protein belongs to the TRAFAC class TrmE-Era-EngA-EngB-Septin-like GTPase superfamily. EngA (Der) GTPase family. Associates with the 50S ribosomal subunit.

Its function is as follows. GTPase that plays an essential role in the late steps of ribosome biogenesis. This Prochlorococcus marinus (strain NATL1A) protein is GTPase Der.